Here is a 267-residue protein sequence, read N- to C-terminus: Phosphate import ATP-binding protein PstB (267 aa).

The ABC transporter domain maps to 12–251; sequence VSLDNVSIRY…EFDKTKNMFN (240 aa). 44 to 51 contributes to the ATP binding site; that stretch reads GPSGCGKS.

The protein belongs to the ABC transporter superfamily. Phosphate importer (TC 3.A.1.7) family. The complex is composed of two ATP-binding proteins (PstB), two transmembrane proteins (PstC and PstA) and a solute-binding protein (PstS).

It is found in the cell inner membrane. It catalyses the reaction phosphate(out) + ATP + H2O = ADP + 2 phosphate(in) + H(+). Functionally, part of the ABC transporter complex PstSACB involved in phosphate import. Responsible for energy coupling to the transport system. The polypeptide is Phosphate import ATP-binding protein PstB (Prochlorococcus marinus (strain NATL2A)).